The following is a 372-amino-acid chain: Glutamate 5-kinase (372 aa).

Lysine 14 provides a ligand contact to ATP. Residues serine 54, aspartate 141, and asparagine 153 each coordinate substrate. 173–174 is an ATP binding site; sequence TD. The PUA domain maps to 280–358; it reads RGRVIIDAGA…SEIESVLGHL (79 aa).

The protein belongs to the glutamate 5-kinase family.

The protein localises to the cytoplasm. It catalyses the reaction L-glutamate + ATP = L-glutamyl 5-phosphate + ADP. Its pathway is amino-acid biosynthesis; L-proline biosynthesis; L-glutamate 5-semialdehyde from L-glutamate: step 1/2. In terms of biological role, catalyzes the transfer of a phosphate group to glutamate to form L-glutamate 5-phosphate. The chain is Glutamate 5-kinase from Cupriavidus metallidurans (strain ATCC 43123 / DSM 2839 / NBRC 102507 / CH34) (Ralstonia metallidurans).